The sequence spans 89 residues: Dynein light chain LC6, flagellar outer arm (89 aa).

The protein belongs to the dynein light chain family. Consists of at least 3 heavy chains (alpha, beta and gamma), 2 intermediate chains and 8 light chains.

It is found in the cytoplasm. The protein localises to the cytoskeleton. It localises to the flagellum axoneme. This is Dynein light chain LC6, flagellar outer arm from Heliocidaris crassispina (Sea urchin).